Here is a 94-residue protein sequence, read N- to C-terminus: Small nuclear ribonucleoprotein E (94 aa).

A Sm domain is found at 14–94 (INCIFNFLQQ…DNITLITSAD (81 aa)).

It belongs to the snRNP Sm proteins family. As to quaternary structure, component of the Sm core complex, present in spliceosomal snRNP U1, U2, U4/U6 and U5. The core complex contains SMB1, SMD1, SMD2, SMD3, SME1, SMX3 and SMX2 (Sm proteins B, D1, D2, D3, E, F and G, respectively), and is probably a heptameric ring structure. SME1 specifically interacts with SMX2 and SMX3. Component of the U4/U6-U5 tri-snRNP complex composed of the U4, U6 and U5 snRNAs and at least PRP3, PRP4, PRP6, PRP8, PRP18, PRP31, PRP38, SNU13, SNU23, SNU66, SNU114, SPP381, SMB1, SMD1, SMD2, SMD3, SMX2, SMX3, LSM2, LSM3, LSM4, LSM5, LSM6, LSM7, LSM8, BRR2 and DIB1.

The protein resides in the cytoplasm. It localises to the nucleus. In terms of biological role, involved in pre-mRNA splicing. Binds and is required for the stability of snRNA U1, U2, U4 and U5 which contain a highly conserved structural motif called the Sm binding site. Involved in cap modification. This chain is Small nuclear ribonucleoprotein E (SME1), found in Saccharomyces cerevisiae (strain ATCC 204508 / S288c) (Baker's yeast).